Consider the following 437-residue polypeptide: Proton/glutamate-aspartate symporter (437 aa).

The Cytoplasmic portion of the chain corresponds to 1–5 (MKNIK). A helical transmembrane segment spans residues 6-26 (FSLAWQILFAMVLGILLGSYL). Topologically, residues 27-50 (HYHSDSRDWLVVNLLSPAGDIFIH) are periplasmic. The helical transmembrane segment at 51–71 (LIKMIVVPIVISTLVVGIAGV) threads the bilayer. The Cytoplasmic segment spans residues 72–84 (GDAKQLGRIGAKT). A helical transmembrane segment spans residues 85 to 105 (IIYFEVITTVAIILGITLANV). Residues 106–159 (FQPGAGVDMSQLATVDISKYQSTTEAVQSSSHGIMGTILSLVPTNIVASMAKGE) are Periplasmic-facing. The chain crosses the membrane as a helical span at residues 160 to 180 (MLPIIFFSVLFGLGLSSLPAT). Topologically, residues 181 to 210 (HREPLVTVFRSISETMFKVTHMVMRYAPVG) are cytoplasmic. Residues 211 to 231 (VFALIAVTVANFGFSSLWPLA) traverse the membrane as a helical segment. Residue Lys232 is a topological domain, periplasmic. The helical transmembrane segment at 233–253 (LVLLVHFAILFFALVVLGIVA) threads the bilayer. Over 254 to 292 (RLCGLSVWILIRILKDELILAYSTASSESVLPRIIEKME) the chain is Cytoplasmic. Residues 293-313 (AYGAPVSITSFVVPTGYSFNL) form a helical membrane-spanning segment. The Periplasmic segment spans residues 314–324 (DGSTLYQSIAA). Residues 325–345 (IFIAQLYGIDLSIWQEIILVL) traverse the membrane as a helical segment. Topologically, residues 346 to 361 (TLMVTSKGIAGVPGVS) are cytoplasmic. A helical transmembrane segment spans residues 362–382 (FVVLLATLGSVGIPLEGLAFI). Over 383–387 (AGVDR) the chain is Periplasmic. A helical transmembrane segment spans residues 388–408 (ILDMARTALNVVGNALAVLVI). Residues 409 to 437 (AKWEHKFDRKKALAYEREVLGKFDKTADQ) lie on the Cytoplasmic side of the membrane.

Belongs to the dicarboxylate/amino acid:cation symporter (DAACS) (TC 2.A.23) family. GltP subfamily.

It is found in the cell inner membrane. Its activity is regulated as follows. Glutamate uptake is inhibited by L-cysteate and beta-hydroxyaspartate. Inhibited by the uncoupler carbonylcyanide m-chlorophenylhydrazone (CCCP). Functionally, catalyzes the proton-dependent, binding-protein-independent transport of glutamate and aspartate. This chain is Proton/glutamate-aspartate symporter, found in Escherichia coli (strain K12).